A 120-amino-acid chain; its full sequence is Holo-[acyl-carrier-protein] synthase (120 aa).

Mg(2+) contacts are provided by Asp8 and Glu60.

It belongs to the P-Pant transferase superfamily. AcpS family. Requires Mg(2+) as cofactor.

It is found in the cytoplasm. It carries out the reaction apo-[ACP] + CoA = holo-[ACP] + adenosine 3',5'-bisphosphate + H(+). Functionally, transfers the 4'-phosphopantetheine moiety from coenzyme A to a Ser of acyl-carrier-protein. This chain is Holo-[acyl-carrier-protein] synthase, found in Anaplasma marginale (strain St. Maries).